A 204-amino-acid polypeptide reads, in one-letter code: INSIG protein homolog (204 aa).

5 consecutive transmembrane segments (helical) span residues 5–27 (ISEA…HSHV), 47–64 (FWFP…AELR), 76–97 (ARQA…ALVH), 101–118 (VVPV…TWCV), and 124–145 (GAAC…LVQL). An a 1,2-diacyl-sn-glycerol-binding site is contributed by histidine 26. Position 150 (tyrosine 150) interacts with a 1,2-diacyl-sn-glycerol. Residues 162–179 (PFLAPLYFAFGVVAALLG) traverse the membrane as a helical segment.

The protein belongs to the INSIG family. As to quaternary structure, homotrimer.

The protein resides in the membrane. Functionally, diacylglycerol-binding protein. This Mycolicibacterium vanbaalenii (strain DSM 7251 / JCM 13017 / BCRC 16820 / KCTC 9966 / NRRL B-24157 / PYR-1) (Mycobacterium vanbaalenii) protein is INSIG protein homolog.